The following is a 178-amino-acid chain: Ribosome maturation factor RimP (178 aa).

It belongs to the RimP family.

Its subcellular location is the cytoplasm. Functionally, required for maturation of 30S ribosomal subunits. The polypeptide is Ribosome maturation factor RimP (Mycobacterium avium (strain 104)).